The sequence spans 313 residues: Metaxin-3 (313 aa).

The tract at residues 280–313 (EKMDDNLRSSPQHRPHRHEAKPSAPASDRNSTPA) is disordered.

Belongs to the metaxin family. As to quaternary structure, part of a large protein complex spanning both mitochondrial membranes termed the mitochondrial intermembrane space bridging (MIB) complex.

The protein localises to the mitochondrion. It localises to the mitochondrion outer membrane. Functionally, could function in transport of proteins into the mitochondrion. The chain is Metaxin-3 (mtx3) from Danio rerio (Zebrafish).